The sequence spans 375 residues: Non-structural protein NS5 (375 aa).

This chain is Non-structural protein NS5 (NS-5), found in Rottboellia (Sorghum).